The primary structure comprises 621 residues: MSANFKMNHKRDQQKSTNVVYQAHHVSRNKRGQVVGTRGGFRGCTVWLTGLSGAGKTTISFALEEYLVSHAIPCYSLDGDNVRHGLNKNLGFSAGDREENIRRIAEVARLFADAGLVCITSFISPFAKDRENARKIHESAGLPFFEIFVDAPLNICESRDVKGLYKRARAGEIKGFTGIDSDYEKPETPECVLKTNLSSVSDCVQQVVELLQEQNIVPHTTIKGIHELFVPENKVDQIRAEAETLPSLPITKLDLQWVQILSEGWATPLKGFMREKEYLQTLHFDTLLDGVVPRDGVINMSIPIVLPVSADDKARLEGCSKFALMYEGRRVALLQDPEFYEHRKEERCSRVWGTATAKHPHIKMVMESGDWLVGGDLQVLERIRWDDGLDQYRLTPLELKQKCKDMNADAVFAFQLRNPVHNGHALLMQDTRRRLLERGYKHPVLLLHPLGGWTKDDDVPLEWRMKQHAAVLEERVLDPKSTIVAIFPSPMLYAGPTEVQWHCRCRMIAGANFYIVGRDPAGMPHPETKKDLYEPTHGGKVLSMAPGLTSVEIIPFRVAAYNKIKKAMDFYDPARHEEFDFISGTRMRKLAREGEDPPDGFMAPKAWKVLTDYYRSLEKTN.

Residues 1 to 216 are adenylyl-sulfate kinase; that stretch reads MSANFKMNHK…VVELLQEQNI (216 aa). Residue 53–58 participates in ATP binding; sequence GAGKTT. Adenosine 5'-phosphosulfate contacts are provided by residues 80–83, phenylalanine 92, 97–100, 123–124, lysine 162, and 175–176; these read DNVR, REEN, IS, and GF. Residues serine 198, 415 to 418, 517 to 521, and alanine 559 each bind ATP; these read QLRN and GRDPA. The segment at 225 to 621 is sulfate adenylyltransferase; sequence IHELFVPENK…DYYRSLEKTN (397 aa).

This sequence in the N-terminal section; belongs to the APS kinase family. In the C-terminal section; belongs to the sulfate adenylyltransferase family. In terms of tissue distribution, expressed in liver, cartilage, skin and brain.

It catalyses the reaction sulfate + ATP + H(+) = adenosine 5'-phosphosulfate + diphosphate. The catalysed reaction is adenosine 5'-phosphosulfate + ATP = 3'-phosphoadenylyl sulfate + ADP + H(+). It functions in the pathway sulfur metabolism; sulfate assimilation. Functionally, bifunctional enzyme with both ATP sulfurylase and APS kinase activity, which mediates two steps in the sulfate activation pathway. The first step is the transfer of a sulfate group to ATP to yield adenosine 5'-phosphosulfate (APS), and the second step is the transfer of a phosphate group from ATP to APS yielding 3'-phosphoadenylylsulfate/PAPS, the activated sulfate donor used by sulfotransferases. In mammals, PAPS is the sole source of sulfate while APS appears to only be an intermediate in the sulfate-activation pathway. May have an important role in skeletogenesis during postnatal growth. The chain is Bifunctional 3'-phosphoadenosine 5'-phosphosulfate synthase 2 (Papss2) from Mus musculus (Mouse).